A 579-amino-acid polypeptide reads, in one-letter code: Isocitrate dehydrogenase kinase/phosphatase (579 aa).

ATP-binding positions include 324 to 330 and Lys-345; that span reads ADGTPGM. The active site involves Asp-380.

Belongs to the AceK family.

It localises to the cytoplasm. The catalysed reaction is L-seryl-[isocitrate dehydrogenase] + ATP = O-phospho-L-seryl-[isocitrate dehydrogenase] + ADP + H(+). Its function is as follows. Bifunctional enzyme which can phosphorylate or dephosphorylate isocitrate dehydrogenase (IDH) on a specific serine residue. This is a regulatory mechanism which enables bacteria to bypass the Krebs cycle via the glyoxylate shunt in response to the source of carbon. When bacteria are grown on glucose, IDH is fully active and unphosphorylated, but when grown on acetate or ethanol, the activity of IDH declines drastically concomitant with its phosphorylation. This Xanthomonas euvesicatoria pv. vesicatoria (strain 85-10) (Xanthomonas campestris pv. vesicatoria) protein is Isocitrate dehydrogenase kinase/phosphatase.